Reading from the N-terminus, the 437-residue chain is Ribosomal protein uS12 methylthiotransferase RimO (437 aa).

The region spanning 4-114 (PRVSFVSLGC…VMAAVHEAAP (111 aa)) is the MTTase N-terminal domain. The [4Fe-4S] cluster site is built by C13, C49, C78, C145, C149, and C152. In terms of domain architecture, Radical SAM core spans 131–369 (LTPRHYAYLK…MQRQQKISAT (239 aa)). The TRAM domain maps to 372-437 (AKKVGKRLPV…DAYDLYGSAV (66 aa)).

This sequence belongs to the methylthiotransferase family. RimO subfamily. Requires [4Fe-4S] cluster as cofactor.

It localises to the cytoplasm. It carries out the reaction L-aspartate(89)-[ribosomal protein uS12]-hydrogen + (sulfur carrier)-SH + AH2 + 2 S-adenosyl-L-methionine = 3-methylsulfanyl-L-aspartate(89)-[ribosomal protein uS12]-hydrogen + (sulfur carrier)-H + 5'-deoxyadenosine + L-methionine + A + S-adenosyl-L-homocysteine + 2 H(+). Its function is as follows. Catalyzes the methylthiolation of an aspartic acid residue of ribosomal protein uS12. The polypeptide is Ribosomal protein uS12 methylthiotransferase RimO (Mesorhizobium japonicum (strain LMG 29417 / CECT 9101 / MAFF 303099) (Mesorhizobium loti (strain MAFF 303099))).